The chain runs to 584 residues: Transcription factor COE1 (584 aa).

At M1 the chain carries N-acetylmethionine. A compositionally biased stretch (polar residues) spans 1 to 14 (MFGIQESIQRSGSS). Residues 1-21 (MFGIQESIQRSGSSMKEEPLG) form a disordered region. Residue K16 forms a Glycyl lysine isopeptide (Lys-Gly) (interchain with G-Cter in SUMO1); alternate linkage. K16 is covalently cross-linked (Glycyl lysine isopeptide (Lys-Gly) (interchain with G-Cter in SUMO2); alternate). Residues 63–66 (RKSN) are interaction with DNA. The segment at 151–170 (CRVLLTHEIMCSRCCDKKSC) adopts a C5-type zinc-finger fold. 2 interaction with DNA regions span residues 197-204 (NCLKNAGN) and 236-239 (NNSK). Residues 255–338 (PCIKAISPSE…KGTPGRFIYT (84 aa)) form the IPT/TIG domain. The disordered stretch occupies residues 450 to 473 (GFTRNSSSVSPHGYVPSTTPQQTN).

It belongs to the COE family. In terms of assembly, homodimer. Interacts with ZNF423 and ZNF521, leading to prevent EBF1 to bind DNA and activate target genes. Interacts with CCR4-NOT component CNOT3. As to expression, expressed exclusively in olfactory receptor neurons and their precursors.

It is found in the nucleus. Functionally, key pioneer transcription factor of B-cell specification and commitment. Recognizes variations of the palindromic sequence 5'-ATTCCCNNGGGAATT-3'. Operates in a transcription factor network to activate B-cell-specific genes and repress genes associated with alternative cell fates. For instance, positively regulates many B-cell specific genes including BCR or CD40 while repressing genes that direct cells into alternative lineages, including GATA3 and TCF7 for the T-cell lineage. In addition to its role during lymphopoiesis, controls the thermogenic gene program in adipocytes during development and in response to environmental cold. This chain is Transcription factor COE1 (Ebf1), found in Rattus norvegicus (Rat).